The primary structure comprises 168 residues: Pathogenesis-related protein 1C (168 aa).

The N-terminal stretch at 1 to 30 (MEFVLFSQMSSFFLVSTLLLFLIISHSCHA) is a signal peptide. One can recognise an SCP domain in the interval 38-156 (LDAHNTARAD…NGGYIVSCNY (119 aa)).

The protein belongs to the CRISP family. In terms of processing, three disulfide bonds are present.

Its subcellular location is the vacuole. Functionally, probably involved in the defense reaction of plants against pathogens. The chain is Pathogenesis-related protein 1C from Nicotiana tabacum (Common tobacco).